The following is a 131-amino-acid chain: Small ribosomal subunit protein uS11 (131 aa).

Belongs to the universal ribosomal protein uS11 family. Part of the 30S ribosomal subunit. Interacts with proteins S7 and S18. Binds to IF-3.

Located on the platform of the 30S subunit, it bridges several disparate RNA helices of the 16S rRNA. Forms part of the Shine-Dalgarno cleft in the 70S ribosome. The sequence is that of Small ribosomal subunit protein uS11 from Thermotoga neapolitana (strain ATCC 49049 / DSM 4359 / NBRC 107923 / NS-E).